Here is a 992-residue protein sequence, read N- to C-terminus: Tubulin glycylase 3A (992 aa).

Disordered stretches follow at residues 1–54 and 68–113; these read MQTR…NRVV and QSDS…LGAP. The segment covering 7-26 has biased composition (basic and acidic residues); it reads SEPHRSRDQVTDGDRNRDQP. Positions 39 to 49 are enriched in pro residues; that stretch reads VTPPAAPPPTP. A TTL domain is found at 295–645; that stretch reads FKLTACVAFL…RRTDPKAELG (351 aa). Residues 457–460, lysine 470, and aspartate 472 contribute to the ATP site; that span reads QKYI. 2 disordered regions span residues 746-766 and 791-828; these read SLCS…TATP and KRNT…PVES. Polar residues predominate over residues 794–807; the sequence is TGGSLSGEQVQSTA.

The protein localises to the cytoplasm. It localises to the cytoskeleton. Its function is as follows. Polylycylase which modifies alpha- and beta-tubulin, generating side chains of glycine on the gamma-carboxyl groups of specific glutamate residues within the C-terminal tail of alpha- and beta-tubulin. Involved both in the side-chain initiation and elongation steps of the polyglycylation reaction by adding a single glycine chain to generate monoglycine side chains and by elongating monoglycine side chains to polyglycine side chains. This is Tubulin glycylase 3A (TTLL3A) from Drosophila melanogaster (Fruit fly).